The chain runs to 490 residues: Pyridine nucleotide-disulfide oxidoreductase domain-containing protein 1 (490 aa).

The protein belongs to the class-I pyridine nucleotide-disulfide oxidoreductase family. PYROXD1 subfamily. FAD serves as cofactor.

Its subcellular location is the nucleus. It is found in the cytoplasm. The protein resides in the myofibril. It localises to the sarcomere. Functionally, probable FAD-dependent oxidoreductase; involved in the cellular oxidative stress response. Required for normal sarcomere structure and muscle fiber integrity. The sequence is that of Pyridine nucleotide-disulfide oxidoreductase domain-containing protein 1 (pyroxd1) from Danio rerio (Zebrafish).